The following is a 487-amino-acid chain: Probable cytochrome P450 513B1 (487 aa).

Residues Met-1–Phe-18 form a helical membrane-spanning segment. Position 433 (Cys-433) interacts with heme.

This sequence belongs to the cytochrome P450 family. Heme is required as a cofactor.

The protein localises to the membrane. The chain is Probable cytochrome P450 513B1 (cyp513B1) from Dictyostelium discoideum (Social amoeba).